A 418-amino-acid chain; its full sequence is Gamma-glutamyl phosphate reductase (418 aa).

It belongs to the gamma-glutamyl phosphate reductase family.

The protein localises to the cytoplasm. The enzyme catalyses L-glutamate 5-semialdehyde + phosphate + NADP(+) = L-glutamyl 5-phosphate + NADPH + H(+). Its pathway is amino-acid biosynthesis; L-proline biosynthesis; L-glutamate 5-semialdehyde from L-glutamate: step 2/2. In terms of biological role, catalyzes the NADPH-dependent reduction of L-glutamate 5-phosphate into L-glutamate 5-semialdehyde and phosphate. The product spontaneously undergoes cyclization to form 1-pyrroline-5-carboxylate. In Pelodictyon phaeoclathratiforme (strain DSM 5477 / BU-1), this protein is Gamma-glutamyl phosphate reductase.